The sequence spans 248 residues: Triosephosphate isomerase (248 aa).

Asn9–Lys11 provides a ligand contact to substrate. His94 (electrophile) is an active-site residue. Catalysis depends on Glu166, which acts as the Proton acceptor. Residues Gly172, Ser212, and Gly233–Gly234 each bind substrate.

Belongs to the triosephosphate isomerase family. As to quaternary structure, homodimer.

Its subcellular location is the cytoplasm. It catalyses the reaction D-glyceraldehyde 3-phosphate = dihydroxyacetone phosphate. Its pathway is carbohydrate biosynthesis; gluconeogenesis. The protein operates within carbohydrate degradation; glycolysis; D-glyceraldehyde 3-phosphate from glycerone phosphate: step 1/1. Involved in the gluconeogenesis. Catalyzes stereospecifically the conversion of dihydroxyacetone phosphate (DHAP) to D-glyceraldehyde-3-phosphate (G3P). This is Triosephosphate isomerase from Alkaliphilus metalliredigens (strain QYMF).